We begin with the raw amino-acid sequence, 165 residues long: Large ribosomal subunit protein uL10 (165 aa).

Belongs to the universal ribosomal protein uL10 family. As to quaternary structure, part of the ribosomal stalk of the 50S ribosomal subunit. The N-terminus interacts with L11 and the large rRNA to form the base of the stalk. The C-terminus forms an elongated spine to which L12 dimers bind in a sequential fashion forming a multimeric L10(L12)X complex.

Forms part of the ribosomal stalk, playing a central role in the interaction of the ribosome with GTP-bound translation factors. This is Large ribosomal subunit protein uL10 from Cronobacter sakazakii (strain ATCC BAA-894) (Enterobacter sakazakii).